The sequence spans 87 residues: Phosphoribosyl-ATP pyrophosphatase (87 aa).

This sequence belongs to the PRA-PH family.

It localises to the cytoplasm. It carries out the reaction 1-(5-phospho-beta-D-ribosyl)-ATP + H2O = 1-(5-phospho-beta-D-ribosyl)-5'-AMP + diphosphate + H(+). It participates in amino-acid biosynthesis; L-histidine biosynthesis; L-histidine from 5-phospho-alpha-D-ribose 1-diphosphate: step 2/9. This is Phosphoribosyl-ATP pyrophosphatase from Salinibacter ruber (strain DSM 13855 / M31).